The following is a 590-amino-acid chain: Methionine--tRNA ligase, mitochondrial (590 aa).

The N-terminal 26 residues, 1 to 26 (MRTRFLFLTSGCKAVPELHKIVLANA), are a transit peptide targeting the mitochondrion. A 'HIGH' region motif is present at residues 51–61 (FYVNASPHLGH). The 'KMSKS' region signature appears at 342 to 346 (KMSKS). ATP is bound at residue Lys345. The segment at 570–590 (LESQRADQQKNRKMEKGSNLK) is disordered. A compositionally biased stretch (basic and acidic residues) spans 571–590 (ESQRADQQKNRKMEKGSNLK).

This sequence belongs to the class-I aminoacyl-tRNA synthetase family.

The protein localises to the mitochondrion matrix. It catalyses the reaction tRNA(Met) + L-methionine + ATP = L-methionyl-tRNA(Met) + AMP + diphosphate. This Takifugu rubripes (Japanese pufferfish) protein is Methionine--tRNA ligase, mitochondrial (mars2).